Consider the following 663-residue polypeptide: F-box protein DAS1 (663 aa).

Residues 46–91 (VFPLTKLPDELMQEVFSHLPQPDRLQLCLVNKRLNKIATKLLYRRI) enclose the F-box domain.

In terms of assembly, interacts with SKP1. Component of the probable SCF(DAS1) complex containing CDC53, SKP1, RBX1 and DAS1.

Its pathway is protein modification; protein ubiquitination. Functionally, substrate recognition component of a SCF (SKP1-CUL1-F-box protein) E3 ubiquitin-protein ligase complex which mediates the ubiquitination and subsequent proteasomal degradation of target proteins. Probably recognizes and binds to phosphorylated target proteins. The protein is F-box protein DAS1 (DAS1) of Saccharomyces cerevisiae (strain ATCC 204508 / S288c) (Baker's yeast).